We begin with the raw amino-acid sequence, 219 residues long: Elongation factor Ts, chloroplastic (219 aa).

This sequence belongs to the EF-Ts family.

The protein resides in the plastid. It is found in the chloroplast. In terms of biological role, associates with the EF-Tu.GDP complex and induces the exchange of GDP to GTP. It remains bound to the aminoacyl-tRNA.EF-Tu.GTP complex up to the GTP hydrolysis stage on the ribosome. This chain is Elongation factor Ts, chloroplastic (tsf), found in Rhodomonas salina (Cryptomonas salina).